The sequence spans 1135 residues: Envelopment polyprotein (1135 aa).

A signal peptide spans Met-1–Ala-35. The Lumenal portion of the chain corresponds to Lys-36–Thr-314. Residues Arg-41–Asp-43 carry the Cell attachment site motif. 2 disulfides stabilise this stretch: Cys-114/Cys-145 and Cys-122/Cys-156. Asn-116 carries an N-linked (GlcNAc...) asparagine; by host glycan. The non-covalent dimerization stretch occupies residues Leu-177 to Leu-195. The N-linked (GlcNAc...) asparagine; by host glycan is linked to Asn-210. Cys-224 and Cys-285 are joined by a disulfide. The helical transmembrane segment at Ala-315–Cys-366 threads the bilayer. Residues Leu-367 to Ser-484 are Cytoplasmic-facing. The segment at Leu-437–Ser-484 is signal for signal peptide peptidase. The Lumenal portion of the chain corresponds to Lys-485 to Arg-1067. Asn-605 and Asn-980 each carry an N-linked (GlcNAc...) asparagine; by host glycan. A helical transmembrane segment spans residues Val-1068–Ile-1088. Topologically, residues Cys-1089–Val-1135 are cytoplasmic.

Belongs to the tospovirus envelope glycoprotein family. In terms of assembly, homodimer; disulfide-linked. Heterodimer with Glycoprotein C. Interacts with nucleoprotein. As to quaternary structure, heterodimer with Glycoprotein N. Interacts with nucleoprotein. Specific enzymatic cleavages in vivo yield mature proteins including Glycoprotein N and Glycoprotein C. In terms of processing, glycosylated with O-linked glycans. Glycosylation is essential for proper subcellular location. Post-translationally, cleaved at acidic pH.

It is found in the virion membrane. Its subcellular location is the host Golgi apparatus membrane. It localises to the host endoplasmic reticulum membrane. Its function is as follows. Forms the spikes present at the surface of the virion together with Glycoprotein C. They are able to attach the virion to a cell receptor and to promote fusion of membranes after endocytosis of the virion. Plays a role in virus binding and/or entry into the vector midgut. Functionally, forms the spikes present at the surface of the virion together with Glycoprotein N. They are able to attach the virion to a cell receptor and to promote fusion of membranes after endocytosis of the virion. Probable class II fusion protein. The protein is Envelopment polyprotein (GP) of Tomato spotted wilt virus (strain Brazilian Br-01) (TSWV).